The following is a 316-amino-acid chain: Aspartate carbamoyltransferase catalytic subunit (316 aa).

Residues R58 and T59 each coordinate carbamoyl phosphate. K86 contributes to the L-aspartate binding site. Residues R108, H136, and Q139 each coordinate carbamoyl phosphate. Residues R169 and R223 each contribute to the L-aspartate site. 2 residues coordinate carbamoyl phosphate: G265 and P266.

It belongs to the aspartate/ornithine carbamoyltransferase superfamily. ATCase family. Heterododecamer (2C3:3R2) of six catalytic PyrB chains organized as two trimers (C3), and six regulatory PyrI chains organized as three dimers (R2).

It carries out the reaction carbamoyl phosphate + L-aspartate = N-carbamoyl-L-aspartate + phosphate + H(+). It functions in the pathway pyrimidine metabolism; UMP biosynthesis via de novo pathway; (S)-dihydroorotate from bicarbonate: step 2/3. Its function is as follows. Catalyzes the condensation of carbamoyl phosphate and aspartate to form carbamoyl aspartate and inorganic phosphate, the committed step in the de novo pyrimidine nucleotide biosynthesis pathway. The chain is Aspartate carbamoyltransferase catalytic subunit from Anaeromyxobacter sp. (strain Fw109-5).